A 276-amino-acid chain; its full sequence is HTH-type transcriptional activator RhaR (276 aa).

One can recognise an HTH araC/xylS-type domain in the interval Glu174–Arg272. 2 DNA-binding regions (H-T-H motif) span residues Ala191 to Thr212 and Val239 to Phe262.

Binds DNA as a dimer.

Its subcellular location is the cytoplasm. Activates expression of the rhaSR operon in response to L-rhamnose. This chain is HTH-type transcriptional activator RhaR, found in Mannheimia succiniciproducens (strain KCTC 0769BP / MBEL55E).